Consider the following 417-residue polypeptide: GPI mannosyltransferase 2 (417 aa).

9 helical membrane-spanning segments follow: residues 10 to 30 (FLIINVTFFAVKLLQFGLVWL), 104 to 124 (IVLKAVSFNLLLHYLSTWIVY), 142 to 162 (LALTTSVLFILSSAAGFLISV), 167 to 187 (IAFTFSLLGMLFRQWSISFDV), 206 to 226 (FCFAFAFLNRSNCLLLGLFYV), 239 to 259 (ITSIFYPILSGTILFGVFVYF), 312 to 332 (IPNFLFGLPNIVITWNAITYF), 344 to 364 (YIWIARIFLFIMVFLANVQII), and 394 to 414 (YYVMWLLIWIPTQTALFACFL).

It belongs to the PIGV family.

It localises to the endoplasmic reticulum membrane. It functions in the pathway glycolipid biosynthesis; glycosylphosphatidylinositol-anchor biosynthesis. Functionally, mannosyltransferase involved in glycosylphosphatidylinositol-anchor biosynthesis. Transfers the second mannose to the glycosylphosphatidylinositol during GPI precursor assembly. The sequence is that of GPI mannosyltransferase 2 (GPI18) from Kluyveromyces lactis (strain ATCC 8585 / CBS 2359 / DSM 70799 / NBRC 1267 / NRRL Y-1140 / WM37) (Yeast).